Reading from the N-terminus, the 203-residue chain is Ribosomal RNA large subunit methyltransferase E (203 aa).

S-adenosyl-L-methionine contacts are provided by glycine 51, tryptophan 53, aspartate 69, aspartate 85, and aspartate 108. Catalysis depends on lysine 148, which acts as the Proton acceptor.

It belongs to the class I-like SAM-binding methyltransferase superfamily. RNA methyltransferase RlmE family.

It localises to the cytoplasm. It carries out the reaction uridine(2552) in 23S rRNA + S-adenosyl-L-methionine = 2'-O-methyluridine(2552) in 23S rRNA + S-adenosyl-L-homocysteine + H(+). Functionally, specifically methylates the uridine in position 2552 of 23S rRNA at the 2'-O position of the ribose in the fully assembled 50S ribosomal subunit. The sequence is that of Ribosomal RNA large subunit methyltransferase E from Methanosphaerula palustris (strain ATCC BAA-1556 / DSM 19958 / E1-9c).